The chain runs to 232 residues: UPF0758 protein BH3032 (232 aa).

Residues 107–229 form the MPN domain; sequence VIRTPEDVSR…FVSLKEKGHL (123 aa). The Zn(2+) site is built by H178, H180, and D191. The short motif at 178–191 is the JAMM motif element; that stretch reads HNHPSGDPTPSRED.

It belongs to the UPF0758 family.

The chain is UPF0758 protein BH3032 from Halalkalibacterium halodurans (strain ATCC BAA-125 / DSM 18197 / FERM 7344 / JCM 9153 / C-125) (Bacillus halodurans).